Reading from the N-terminus, the 647-residue chain is XK-related protein 4 (647 aa).

A helical membrane pass occupies residues 142–162; it reads WFGLTLFFVVLGSLSVQVFSF. The disordered stretch occupies residues 193-238; the sequence is VSSGSAAGEGEARPSTPQRQASNASKSNIAATNSGSNSNGATRTSG. Ser-197 bears the Phosphoserine mark. Positions 207 to 236 are enriched in polar residues; sequence STPQRQASNASKSNIAATNSGSNSNGATRT. 7 consecutive transmembrane segments (helical) span residues 245-265, 328-348, 362-382, 393-415, 425-445, 454-474, and 484-504; these read CSFC…GQVW, LQAL…WALA, KPIS…TIAA, VFQL…WIVH, WEEI…WFNV, LFIY…LWYL, and FAIP…VFML.

It belongs to the XK family. As to quaternary structure, homodimer; homodimerization takes place upon caspase cleavage. Interacts with the processed C-terminus of XRCC4 (protein XRCC4, C-terminus); interaction promotes the phospholipid scramblase activity. In terms of processing, undergoes proteolytic processing by caspase-3 (CASP3), caspase-6 (CASP6) and caspase-7 (CASP7) to generate the XK-related protein 4, processed form, leading to its activation.

It is found in the cell membrane. The catalysed reaction is a 1,2-diacyl-sn-glycero-3-phospho-L-serine(in) = a 1,2-diacyl-sn-glycero-3-phospho-L-serine(out). Its activity is regulated as follows. Phospholipid scramblase activity is activated upon caspase cleavage to generate the XK-related protein 4, processed form. Does not act prior the onset of apoptosis. With respect to regulation, homodimerizes upon caspase cleavage. Phospholipid scramblase activity is activated following interaction with the processed C-terminus of XRCC4 (protein XRCC4, C-terminus). In terms of biological role, phospholipid scramblase that promotes phosphatidylserine exposure on apoptotic cell surface. Phosphatidylserine is a specific marker only present at the surface of apoptotic cells and acts as a specific signal for engulfment. The polypeptide is XK-related protein 4 (Rattus norvegicus (Rat)).